We begin with the raw amino-acid sequence, 246 residues long: Putative protein phosphatase 2C-type (246 aa).

In terms of domain architecture, PPM-type phosphatase spans 2 to 240 (KISLKTDIGQ…DNITIALVHN (239 aa)). Mn(2+) contacts are provided by Asp-36, Gly-37, Asp-192, and Asp-231.

Mg(2+) is required as a cofactor. The cofactor is Mn(2+).

The catalysed reaction is O-phospho-L-seryl-[protein] + H2O = L-seryl-[protein] + phosphate. The enzyme catalyses O-phospho-L-threonyl-[protein] + H2O = L-threonyl-[protein] + phosphate. This chain is Putative protein phosphatase 2C-type, found in Streptococcus pyogenes serotype M6 (strain ATCC BAA-946 / MGAS10394).